A 560-amino-acid chain; its full sequence is Arginine--tRNA ligase (560 aa).

The short motif at 164 to 174 (FYYNDAGNQID) is the 'HIGH' region element.

Belongs to the class-I aminoacyl-tRNA synthetase family. In terms of assembly, monomer.

It is found in the cytoplasm. The catalysed reaction is tRNA(Arg) + L-arginine + ATP = L-arginyl-tRNA(Arg) + AMP + diphosphate. This Bordetella pertussis (strain Tohama I / ATCC BAA-589 / NCTC 13251) protein is Arginine--tRNA ligase.